Consider the following 152-residue polypeptide: Large ribosomal subunit protein bL9 (152 aa).

It belongs to the bacterial ribosomal protein bL9 family.

Its function is as follows. Binds to the 23S rRNA. The polypeptide is Large ribosomal subunit protein bL9 (Parasynechococcus marenigrum (strain WH8102)).